Consider the following 247-residue polypeptide: Cell division protein ZapD (247 aa).

The protein belongs to the ZapD family. As to quaternary structure, interacts with FtsZ.

It localises to the cytoplasm. Functionally, cell division factor that enhances FtsZ-ring assembly. Directly interacts with FtsZ and promotes bundling of FtsZ protofilaments, with a reduction in FtsZ GTPase activity. This Shigella sonnei (strain Ss046) protein is Cell division protein ZapD.